The sequence spans 298 residues: Small ribosomal subunit biogenesis GTPase RsgA (298 aa).

The 162-residue stretch at 67-228 (TNELVRPPIS…IADTPGFSSL (162 aa)) folds into the CP-type G domain. Residues 116 to 119 (TKMD) and 171 to 179 (GQSGVGKSS) contribute to the GTP site. Zn(2+)-binding residues include Cys-252, Cys-257, His-259, and Cys-265.

The protein belongs to the TRAFAC class YlqF/YawG GTPase family. RsgA subfamily. Monomer. Associates with 30S ribosomal subunit, binds 16S rRNA. The cofactor is Zn(2+).

Its subcellular location is the cytoplasm. In terms of biological role, one of several proteins that assist in the late maturation steps of the functional core of the 30S ribosomal subunit. Helps release RbfA from mature subunits. May play a role in the assembly of ribosomal proteins into the subunit. Circularly permuted GTPase that catalyzes slow GTP hydrolysis, GTPase activity is stimulated by the 30S ribosomal subunit. The sequence is that of Small ribosomal subunit biogenesis GTPase RsgA from Bacillus pumilus (strain SAFR-032).